The following is a 266-amino-acid chain: Thiazole synthase (266 aa).

The active-site Schiff-base intermediate with DXP is lysine 107. 1-deoxy-D-xylulose 5-phosphate is bound by residues glycine 168, 194–195, and 216–217; these read AG and NT.

It belongs to the ThiG family. As to quaternary structure, homotetramer. Forms heterodimers with either ThiH or ThiS.

Its subcellular location is the cytoplasm. It catalyses the reaction [ThiS sulfur-carrier protein]-C-terminal-Gly-aminoethanethioate + 2-iminoacetate + 1-deoxy-D-xylulose 5-phosphate = [ThiS sulfur-carrier protein]-C-terminal Gly-Gly + 2-[(2R,5Z)-2-carboxy-4-methylthiazol-5(2H)-ylidene]ethyl phosphate + 2 H2O + H(+). The protein operates within cofactor biosynthesis; thiamine diphosphate biosynthesis. Its function is as follows. Catalyzes the rearrangement of 1-deoxy-D-xylulose 5-phosphate (DXP) to produce the thiazole phosphate moiety of thiamine. Sulfur is provided by the thiocarboxylate moiety of the carrier protein ThiS. In vitro, sulfur can be provided by H(2)S. This is Thiazole synthase from Azorhizobium caulinodans (strain ATCC 43989 / DSM 5975 / JCM 20966 / LMG 6465 / NBRC 14845 / NCIMB 13405 / ORS 571).